The sequence spans 940 residues: Translation initiation factor IF-2 (940 aa).

Low complexity-rich tracts occupy residues 138–147 (APVEVVAEPE) and 161–208 (PVVV…ITEL). Residues 138 to 354 (APVEVVAEPE…DRQTFQAPTE (217 aa)) form a disordered region. Basic and acidic residues-rich tracts occupy residues 214-271 (IAAR…EEAA) and 289-311 (AKADDKAGKDAKRGPAREADGAK). The 170-residue stretch at 440–609 (PRAPVVTVMG…LLQAEVLELT (170 aa)) folds into the tr-type G domain. The G1 stretch occupies residues 449-456 (GHVDHGKT). Residue 449–456 (GHVDHGKT) coordinates GTP. The segment at 474-478 (GITQH) is G2. The interval 495–498 (DTPG) is G3. GTP-binding positions include 495 to 499 (DTPGH) and 549 to 552 (TKID). The G4 stretch occupies residues 549 to 552 (TKID). Positions 585–587 (SAK) are G5.

The protein belongs to the TRAFAC class translation factor GTPase superfamily. Classic translation factor GTPase family. IF-2 subfamily.

The protein localises to the cytoplasm. Functionally, one of the essential components for the initiation of protein synthesis. Protects formylmethionyl-tRNA from spontaneous hydrolysis and promotes its binding to the 30S ribosomal subunits. Also involved in the hydrolysis of GTP during the formation of the 70S ribosomal complex. This Azoarcus sp. (strain BH72) protein is Translation initiation factor IF-2.